We begin with the raw amino-acid sequence, 89 residues long: Small ribosomal subunit protein uS15 (89 aa).

This sequence belongs to the universal ribosomal protein uS15 family. In terms of assembly, part of the 30S ribosomal subunit. Forms a bridge to the 50S subunit in the 70S ribosome, contacting the 23S rRNA.

Functionally, one of the primary rRNA binding proteins, it binds directly to 16S rRNA where it helps nucleate assembly of the platform of the 30S subunit by binding and bridging several RNA helices of the 16S rRNA. Its function is as follows. Forms an intersubunit bridge (bridge B4) with the 23S rRNA of the 50S subunit in the ribosome. The protein is Small ribosomal subunit protein uS15 of Limosilactobacillus fermentum (strain NBRC 3956 / LMG 18251) (Lactobacillus fermentum).